The primary structure comprises 30 residues: Cycloviolacin-O18 (30 aa).

Residues 1–30 (GIPCGESCVYIPCTVTALAGCKCKSKVCYN) constitute a cross-link (cyclopeptide (Gly-Asn)). Disulfide bonds link C4–C21, C8–C23, and C13–C28.

Post-translationally, this is a cyclic peptide. As to expression, expressed in leaves, petals and petioles but not in roots and runners (at protein level).

Functionally, probably participates in a plant defense mechanism. In Viola odorata (Sweet violet), this protein is Cycloviolacin-O18.